The following is a 463-amino-acid chain: Sodium-coupled neutral amino acid transporter 7 (463 aa).

Phosphoserine is present on Ser28. A run of 11 helical transmembrane segments spans residues 56-76 (AVFIVVNACLGAGLLNFPAAF), 82-102 (VAAGIALQMGMLVFIISGLVI), 130-150 (LCEVAIAVYTFGTCIAFLIII), 179-199 (FTISLTAFLFILPLSIPKEIG), 206-226 (FLSVVGTWYVTAIIIIKYIWP), 240-260 (ASWMAVFNAMPTICFGFQCHV), 283-303 (AAMVIALAVYMGTGICGFLTF), 320-340 (VAVAVARAFIILSVLTSYPIL), 372-392 (VLQTLVWFLLTLLLALFIPDI), 396-416 (ISVIGGLAACFIFIFPGLCLI), and 429-449 (ASWWALVSYGVLLVTLGAFIF).

Belongs to the amino acid/polyamine transporter 2 family. In terms of assembly, interacts with the mTORC1 complex; this interaction mediates the recruitment of mTORC1 to the lysosome and its subsequent activation. Highly expressed in the brain, including the hippocampus, especially in the granular layer of dentate gyrus cells and the pyramidal cell layer of the hippocampus, amygdala, thalamus, hypothalamus, in the layer of Purkinje cells in the cerebellum and the layers of cortex. Particularly strong expression in neurons of the ventromedial hypothalamus, basolateral amygdala, ventral tegmental area, and locus coeruleus. Not detected in glial cells, including astrocytes. In addition to brain, also expressed in the spinal cord (at protein level).

It localises to the lysosome membrane. The protein localises to the cell projection. Its subcellular location is the axon. The catalysed reaction is L-glutamine(in) + Na(+)(in) = L-glutamine(out) + Na(+)(out). It carries out the reaction L-asparagine(in) + Na(+)(in) = L-asparagine(out) + Na(+)(out). In terms of biological role, symporter that selectively cotransports sodium ions and amino acids, such as L-glutamine and L-asparagine from the lysosome into the cytoplasm and may participates in mTORC1 activation. The transport activity requires an acidic lysosomal lumen. The sequence is that of Sodium-coupled neutral amino acid transporter 7 from Mus musculus (Mouse).